A 389-amino-acid polypeptide reads, in one-letter code: NAD-dependent protein deacetylase sirtuin-2 (389 aa).

Residues 1 to 34 (MAEPDPSHPLETQAGKVQEAQDSDSDSEGGAAGG) form a disordered region. The residue at position 2 (Ala2) is an N-acetylalanine. Phosphoserine occurs at positions 23, 25, 27, and 53. The Deacetylase sirtuin-type domain occupies 57-338 (RLLDELTLEG…LALAELLGWK (282 aa)). NAD(+) contacts are provided by residues 85-89 (AGIST) and 95-97 (DFR). At Ser100 the chain carries Phosphoserine. 167 to 170 (QNID) is an NAD(+) binding site. His187 (proton acceptor) is an active-site residue. Zn(2+)-binding residues include Cys195 and Cys200. Ser207 carries the phosphoserine modification. Cys221 and Cys224 together coordinate Zn(2+). NAD(+) is bound by residues 262–263 (TS), 286–288 (NKE), and Cys324. The segment at 350–389 (ASIDAQSGAEAPNPSTSASPRKSPPPAQDEARTTEREKPQ) is disordered. A phosphoserine mark is found at Ser368 and Ser372. A compositionally biased stretch (basic and acidic residues) spans 378–389 (DEARTTEREKPQ).

The protein belongs to the sirtuin family. Class I subfamily. In terms of assembly, interacts with CDC20, FOXO3 and FZR1. Associates with microtubules in primary cortical mature neurons. Homotrimer. Interacts (via both phosphorylated, unphosphorylated, active or inactive forms) with HDAC6; the interaction is necessary for the complex to interact with alpha-tubulin, suggesting that these proteins belong to a large complex that deacetylates the cytoskeleton. Interacts with FOXO1; the interaction is disrupted upon serum-starvation or oxidative stress, leading to increased level of acetylated FOXO1 and induction of autophagy. Interacts with RELA; the interaction occurs in the cytoplasm and is increased in a TNF-alpha-dependent manner. Interacts with HOXA10; the interaction is direct. Interacts with YWHAB and YWHAG; the interactions occur in a AKT-dependent manner and increase SIRT2-dependent TP53 deacetylation. Interacts with MAPK1/ERK2 and MAPK3/ERK1; the interactions increase SIRT2 stability and deacetylation activity. Interacts (phosphorylated form) with KMT5A isoform 2; the interaction is direct, stimulates KMT5A-mediated methyltransferase activity on histone at 'Lys-20' (H4K20me1) and is increased in a H(2)O(2)-induced oxidative stress-dependent manner. Interacts with G6PD; the interaction is enhanced by H(2)O(2) treatment. Interacts with a G1/S-specific cyclin E-CDK2 complex. Interacts with AURKA, CDK5R1 (p35 form) and CDK5 and HIF1A. Interacts with the tRNA ligase SARS1; recruited to the VEGFA promoter via interaction with SARS1. Interacts with BEX4; negatively regulates alpha-tubulin deacetylation by SIRT2. Zn(2+) is required as a cofactor. Phosphorylated at phosphoserine and phosphothreonine. Phosphorylated at Ser-368 by a mitotic kinase CDK1/cyclin B at the G2/M transition; phosphorylation regulates the delay in cell-cycle progression. Phosphorylated at Ser-368 by a mitotic kinase G1/S-specific cyclin E/Cdk2 complex; phosphorylation inactivates SIRT2-mediated alpha-tubulin deacetylation and thereby negatively regulates cell adhesion, cell migration and neurite outgrowth during neuronal differentiation. Phosphorylated by cyclin A/Cdk2 and p35-Cdk5 complexes and to a lesser extent by the cyclin D3/Cdk4 and cyclin B/Cdk1, in vitro. Dephosphorylated at Ser-368 by CDC14A and CDC14B around early anaphase. Post-translationally, acetylated by EP300; acetylation leads both to the decreased of SIRT2-mediated alpha-tubulin deacetylase activity and SIRT2-mediated down-regulation of TP53 transcriptional activity. In terms of processing, ubiquitinated.

It is found in the nucleus. The protein localises to the cytoplasm. Its subcellular location is the perinuclear region. It localises to the cytoskeleton. The protein resides in the microtubule organizing center. It is found in the centrosome. The protein localises to the centriole. Its subcellular location is the spindle. It localises to the midbody. The protein resides in the chromosome. It is found in the perikaryon. The protein localises to the cell projection. Its subcellular location is the growth cone. It localises to the myelin membrane. It carries out the reaction N(6)-acetyl-L-lysyl-[protein] + NAD(+) + H2O = 2''-O-acetyl-ADP-D-ribose + nicotinamide + L-lysyl-[protein]. The enzyme catalyses N(6)-tetradecanoyl-L-lysyl-[protein] + NAD(+) + H2O = 2''-O-tetradecanoyl-ADP-D-ribose + nicotinamide + L-lysyl-[protein]. It catalyses the reaction N(6)-hexadecanoyl-L-lysyl-[protein] + NAD(+) + H2O = 2''-O-hexadecanoyl-ADP-D-ribose + nicotinamide + L-lysyl-[protein]. With respect to regulation, inhibited by Sirtinol, A3 and M15 small molecules. Inhibited by nicotinamide. In terms of biological role, NAD-dependent protein deacetylase, which deacetylates internal lysines on histone and alpha-tubulin as well as many other proteins such as key transcription factors. Participates in the modulation of multiple and diverse biological processes such as cell cycle control, genomic integrity, microtubule dynamics, cell differentiation, metabolic networks, and autophagy. Plays a major role in the control of cell cycle progression and genomic stability. Functions in the antephase checkpoint preventing precocious mitotic entry in response to microtubule stress agents, and hence allowing proper inheritance of chromosomes. Positively regulates the anaphase promoting complex/cyclosome (APC/C) ubiquitin ligase complex activity by deacetylating CDC20 and FZR1, then allowing progression through mitosis. Associates both with chromatin at transcriptional start sites (TSSs) and enhancers of active genes. Plays a role in cell cycle and chromatin compaction through epigenetic modulation of the regulation of histone H4 'Lys-20' methylation (H4K20me1) during early mitosis. Specifically deacetylates histone H4 at 'Lys-16' (H4K16ac) between the G2/M transition and metaphase enabling H4K20me1 deposition by KMT5A leading to ulterior levels of H4K20me2 and H4K20me3 deposition throughout cell cycle, and mitotic S-phase progression. Deacetylates KMT5A modulating KMT5A chromatin localization during the mitotic stress response. Also deacetylates histone H3 at 'Lys-57' (H3K56ac) during the mitotic G2/M transition. During oocyte meiosis progression, may deacetylate histone H4 at 'Lys-16' (H4K16ac) and alpha-tubulin, regulating spindle assembly and chromosome alignment by influencing microtubule dynamics and kinetochore function. Deacetylates histone H4 at 'Lys-16' (H4K16ac) at the VEGFA promoter and thereby contributes to regulate expression of VEGFA, a key regulator of angiogenesis. Deacetylates alpha-tubulin at 'Lys-40' and hence controls neuronal motility, oligodendroglial cell arbor projection processes and proliferation of non-neuronal cells. Phosphorylation at Ser-368 by a G1/S-specific cyclin E-CDK2 complex inactivates SIRT2-mediated alpha-tubulin deacetylation, negatively regulating cell adhesion, cell migration and neurite outgrowth during neuronal differentiation. Deacetylates PARD3 and participates in the regulation of Schwann cell peripheral myelination formation during early postnatal development and during postinjury remyelination. Involved in several cellular metabolic pathways. Plays a role in the regulation of blood glucose homeostasis by deacetylating and stabilizing phosphoenolpyruvate carboxykinase PCK1 activity in response to low nutrient availability. Acts as a key regulator in the pentose phosphate pathway (PPP) by deacetylating and activating the glucose-6-phosphate G6PD enzyme, and therefore, stimulates the production of cytosolic NADPH to counteract oxidative damage. Maintains energy homeostasis in response to nutrient deprivation as well as energy expenditure by inhibiting adipogenesis and promoting lipolysis. Attenuates adipocyte differentiation by deacetylating and promoting FOXO1 interaction to PPARG and subsequent repression of PPARG-dependent transcriptional activity. Plays a role in the regulation of lysosome-mediated degradation of protein aggregates by autophagy in neuronal cells. Deacetylates FOXO1 in response to oxidative stress or serum deprivation, thereby negatively regulating FOXO1-mediated autophagy. Deacetylates a broad range of transcription factors and co-regulators regulating target gene expression. Deacetylates transcriptional factor FOXO3 stimulating the ubiquitin ligase SCF(SKP2)-mediated FOXO3 ubiquitination and degradation. Deacetylates HIF1A and therefore promotes HIF1A degradation and inhibition of HIF1A transcriptional activity in tumor cells in response to hypoxia. Deacetylates RELA in the cytoplasm inhibiting NF-kappaB-dependent transcription activation upon TNF-alpha stimulation. Inhibits transcriptional activation by deacetylating p53/TP53 and EP300. Also deacetylates EIF5A. Functions as a negative regulator on oxidative stress-tolerance in response to anoxia-reoxygenation conditions. Plays a role as tumor suppressor. In addition to protein deacetylase activity, also has activity toward long-chain fatty acyl groups and mediates protein-lysine demyristoylation and depalmitoylation of target proteins, such as ARF6 and KRAS, thereby regulating their association with membranes. The protein is NAD-dependent protein deacetylase sirtuin-2 (SIRT2) of Macaca fascicularis (Crab-eating macaque).